Consider the following 673-residue polypeptide: DNA ligase (673 aa).

Residues Asp38–Asp42, Ser87–Leu88, and Glu119 each bind NAD(+). Lys121 functions as the N6-AMP-lysine intermediate in the catalytic mechanism. NAD(+)-binding residues include Arg142, Glu179, Lys296, and Lys320. Residues Cys414, Cys417, Cys432, and Cys438 each coordinate Zn(2+). The BRCT domain occupies Val595–Ser673.

Belongs to the NAD-dependent DNA ligase family. LigA subfamily. Requires Mg(2+) as cofactor. Mn(2+) serves as cofactor.

The catalysed reaction is NAD(+) + (deoxyribonucleotide)n-3'-hydroxyl + 5'-phospho-(deoxyribonucleotide)m = (deoxyribonucleotide)n+m + AMP + beta-nicotinamide D-nucleotide.. Functionally, DNA ligase that catalyzes the formation of phosphodiester linkages between 5'-phosphoryl and 3'-hydroxyl groups in double-stranded DNA using NAD as a coenzyme and as the energy source for the reaction. It is essential for DNA replication and repair of damaged DNA. In Coxiella burnetii (strain CbuK_Q154) (Coxiella burnetii (strain Q154)), this protein is DNA ligase.